Reading from the N-terminus, the 428-residue chain is Tryptophan synthase beta chain (428 aa).

An N6-(pyridoxal phosphate)lysine modification is found at lysine 100.

Belongs to the TrpB family. As to quaternary structure, tetramer of two alpha and two beta chains. Pyridoxal 5'-phosphate is required as a cofactor.

The enzyme catalyses (1S,2R)-1-C-(indol-3-yl)glycerol 3-phosphate + L-serine = D-glyceraldehyde 3-phosphate + L-tryptophan + H2O. It participates in amino-acid biosynthesis; L-tryptophan biosynthesis; L-tryptophan from chorismate: step 5/5. Its function is as follows. The beta subunit is responsible for the synthesis of L-tryptophan from indole and L-serine. The chain is Tryptophan synthase beta chain from Streptomyces griseus subsp. griseus (strain JCM 4626 / CBS 651.72 / NBRC 13350 / KCC S-0626 / ISP 5235).